The following is a 473-amino-acid chain: Cannabinoid receptor 1 (473 aa).

Topologically, residues M1–Q118 are extracellular. Residues K2–M23 form a required for mitochondrial localization region. Residues N79 and N85 are each glycosylated (N-linked (GlcNAc...) asparagine). A helical transmembrane segment spans residues L119–L144. Topologically, residues Q145–H156 are cytoplasmic. The helical transmembrane segment at F157 to L177 threads the bilayer. The Extracellular segment spans residues D178–N189. The helical transmembrane segment at V190–I214 threads the bilayer. At D215 to K234 the chain is on the cytoplasmic side. A helical membrane pass occupies residues A235–W257. Over N258–E275 the chain is Extracellular. A helical transmembrane segment spans residues N276–W301. Residues K302–T346 are Cytoplasmic-facing. A helical transmembrane segment spans residues L347 to Y367. The Extracellular portion of the chain corresponds to D368–T379. Residues V380–L401 traverse the membrane as a helical segment. Over R402–V473 the chain is Cytoplasmic. C417 is lipidated: S-palmitoyl cysteine.

Belongs to the G-protein coupled receptor 1 family. Post-translationally, palmitoylation at Cys-417 is important for recruitment at both plasma membrane and lipid rafts and association with G protein alpha subunits.

It localises to the cell membrane. The protein localises to the mitochondrion outer membrane. It is found in the cell projection. Its subcellular location is the axon. The protein resides in the presynapse. Its activity is regulated as follows. Hemopressin, a peptide derived from hemoglobin subunit alpha (HBA1 and/or HBA2), acts as an antagonist peptide: hemopressin-binding efficiently blocks cannabinoid receptor CNR1 and subsequent signaling. G-protein coupled receptor for cannabinoids. Mediates many cannabinoid-induced effects in the central nervous system (CNS), as well as in peripheral tissues. Regulates cellular respiration and energy production in response to cannabinoids. Signaling typically involves reduction in cyclic AMP. The sequence is that of Cannabinoid receptor 1 (CNR1) from Taricha granulosa (Roughskin newt).